A 303-amino-acid polypeptide reads, in one-letter code: Ribosomal protein L11 methyltransferase (303 aa).

Threonine 144, glycine 165, aspartate 187, and asparagine 235 together coordinate S-adenosyl-L-methionine.

This sequence belongs to the methyltransferase superfamily. PrmA family.

It is found in the cytoplasm. It carries out the reaction L-lysyl-[protein] + 3 S-adenosyl-L-methionine = N(6),N(6),N(6)-trimethyl-L-lysyl-[protein] + 3 S-adenosyl-L-homocysteine + 3 H(+). Its function is as follows. Methylates ribosomal protein L11. The chain is Ribosomal protein L11 methyltransferase from Prochlorococcus marinus (strain MIT 9301).